A 282-amino-acid chain; its full sequence is Bifunctional protein FolD (282 aa).

Residues 166 to 168 (GRS) and Ser-191 contribute to the NADP(+) site.

This sequence belongs to the tetrahydrofolate dehydrogenase/cyclohydrolase family. In terms of assembly, homodimer.

It carries out the reaction (6R)-5,10-methylene-5,6,7,8-tetrahydrofolate + NADP(+) = (6R)-5,10-methenyltetrahydrofolate + NADPH. It catalyses the reaction (6R)-5,10-methenyltetrahydrofolate + H2O = (6R)-10-formyltetrahydrofolate + H(+). It participates in one-carbon metabolism; tetrahydrofolate interconversion. In terms of biological role, catalyzes the oxidation of 5,10-methylenetetrahydrofolate to 5,10-methenyltetrahydrofolate and then the hydrolysis of 5,10-methenyltetrahydrofolate to 10-formyltetrahydrofolate. In Acidovorax ebreus (strain TPSY) (Diaphorobacter sp. (strain TPSY)), this protein is Bifunctional protein FolD.